The following is a 204-amino-acid chain: Thiamine-phosphate synthase (204 aa).

Residues 35-39 and asparagine 67 contribute to the 4-amino-2-methyl-5-(diphosphooxymethyl)pyrimidine site; that span reads QVREK. Residues aspartate 68 and aspartate 87 each coordinate Mg(2+). Residue serine 106 coordinates 4-amino-2-methyl-5-(diphosphooxymethyl)pyrimidine. 132–134 provides a ligand contact to 2-[(2R,5Z)-2-carboxy-4-methylthiazol-5(2H)-ylidene]ethyl phosphate; that stretch reads TPT. Residue lysine 135 coordinates 4-amino-2-methyl-5-(diphosphooxymethyl)pyrimidine. 2-[(2R,5Z)-2-carboxy-4-methylthiazol-5(2H)-ylidene]ethyl phosphate-binding positions include glycine 163 and 183–184; that span reads VS.

It belongs to the thiamine-phosphate synthase family. The cofactor is Mg(2+).

The enzyme catalyses 2-[(2R,5Z)-2-carboxy-4-methylthiazol-5(2H)-ylidene]ethyl phosphate + 4-amino-2-methyl-5-(diphosphooxymethyl)pyrimidine + 2 H(+) = thiamine phosphate + CO2 + diphosphate. It catalyses the reaction 2-(2-carboxy-4-methylthiazol-5-yl)ethyl phosphate + 4-amino-2-methyl-5-(diphosphooxymethyl)pyrimidine + 2 H(+) = thiamine phosphate + CO2 + diphosphate. It carries out the reaction 4-methyl-5-(2-phosphooxyethyl)-thiazole + 4-amino-2-methyl-5-(diphosphooxymethyl)pyrimidine + H(+) = thiamine phosphate + diphosphate. It functions in the pathway cofactor biosynthesis; thiamine diphosphate biosynthesis; thiamine phosphate from 4-amino-2-methyl-5-diphosphomethylpyrimidine and 4-methyl-5-(2-phosphoethyl)-thiazole: step 1/1. Its function is as follows. Condenses 4-methyl-5-(beta-hydroxyethyl)thiazole monophosphate (THZ-P) and 2-methyl-4-amino-5-hydroxymethyl pyrimidine pyrophosphate (HMP-PP) to form thiamine monophosphate (TMP). The polypeptide is Thiamine-phosphate synthase (Vibrio parahaemolyticus serotype O3:K6 (strain RIMD 2210633)).